A 320-amino-acid chain; its full sequence is Tabersonine synthase (320 aa).

The Involved in the stabilization of the negatively charged intermediate by the formation of the oxyanion hole motif lies at 78 to 80 (HGA). Glycine 81 is a (-)-tabersonine binding site. Serine 170 serves as the catalytic Proton acceptor. Aspartate 266 is an active-site residue. Residue tyrosine 297 coordinates (-)-tabersonine. The active-site Proton donor/acceptor is tyrosine 297.

This sequence belongs to the 'GDXG' lipolytic enzyme family. Interacts with dehydroprecondylocarpine acetate synthase (DPAS). Expressed in leaf epidermis.

The protein localises to the cytoplasm. Its subcellular location is the cytosol. The protein resides in the nucleus. It catalyses the reaction dehydrosecodine = (-)-tabersonine. The catalysed reaction is dihydroprecondylocarpine acetate = (-)-tabersonine + acetate + H(+). It participates in alkaloid biosynthesis. Functionally, component of iboga and aspidosperma monoterpenoid indole alkaloids (MIAs, e.g. tabersonine and catharanthine) biosynthesis pathway from 19E-geissoschizine, psychoactive compounds likely to be used in the treatment of opioid dependence. Catalyzes the conversion of dehydrosecodine to tabersonine, a precursor of vindoline; this process starts with the conversion of dihydroprecondylocarpine acetate to dehydrosecodine. This chain is Tabersonine synthase, found in Catharanthus roseus (Madagascar periwinkle).